Consider the following 451-residue polypeptide: MPPKNNQITYNIFKVDHRFALPRVRPKFPKFSELYLELLVNRSKVDPQLMNEPYVHRYDPVVSSGESMVNPVPPADDGRMVATTLKAVPRLSSVPNPSPAKPTQKPTISRESFVWESSASIDPSPRVQKKSRGRPASSTPSIEPESISRYRQVKRSIISSYYKQVGEGAPSTTRRAADSENERRPSEVREAPESRRRRETSETGSDKSKAPPPIKEIKKTFGNEENPLINVFEDYPQAKDEDDHKRELLFKFKRLRQTYPKVDIPDFTMLSNHETMKRTYDSTLRNLSIDSTVENYKSYLMMGFMACEMVLGKIGFDMEGYTQQQTLHMNKYEKLLVELGEKSYVPNSVNKWPVEVRLIGLMLFQTTIFIISKIIAKKTNVNLLQIYNNFSGLNEPPKVTRNGSSSGFASGTSSPLVFIPRTKRPSLVPSEKKMRGPSVTRDLAAEQERDA.

Disordered regions lie at residues 89–150 and 164–222; these read PRLS…ISRY and QVGE…KTFG. The segment covering 104-121 has biased composition (polar residues); it reads QKPTISRESFVWESSASI. Residues 137–147 are compositionally biased toward low complexity; it reads SSTPSIEPESI. The span at 175–222 shows a compositional bias: basic and acidic residues; sequence RAADSENERRPSEVREAPESRRRRETSETGSDKSKAPPPIKEIKKTFG. A helical membrane pass occupies residues 358-376; that stretch reads LIGLMLFQTTIFIISKIIA. The interval 401–451 is disordered; the sequence is RNGSSSGFASGTSSPLVFIPRTKRPSLVPSEKKMRGPSVTRDLAAEQERDA. Positions 403–414 are enriched in low complexity; that stretch reads GSSSGFASGTSS.

Belongs to the IIV-6 067R family.

The protein resides in the membrane. This is an uncharacterized protein from Invertebrate iridescent virus 3 (IIV-3).